Consider the following 314-residue polypeptide: 4-hydroxy-3-methylbut-2-enyl diphosphate reductase (314 aa).

C12 lines the [4Fe-4S] cluster pocket. 2 residues coordinate (2E)-4-hydroxy-3-methylbut-2-enyl diphosphate: H43 and H81. The dimethylallyl diphosphate site is built by H43 and H81. Isopentenyl diphosphate contacts are provided by H43 and H81. C103 is a binding site for [4Fe-4S] cluster. H131 provides a ligand contact to (2E)-4-hydroxy-3-methylbut-2-enyl diphosphate. H131 lines the dimethylallyl diphosphate pocket. Position 131 (H131) interacts with isopentenyl diphosphate. Residue E133 is the Proton donor of the active site. T170 provides a ligand contact to (2E)-4-hydroxy-3-methylbut-2-enyl diphosphate. C198 lines the [4Fe-4S] cluster pocket. (2E)-4-hydroxy-3-methylbut-2-enyl diphosphate-binding residues include S226, N228, and S271. Dimethylallyl diphosphate is bound by residues S226, N228, and S271. The isopentenyl diphosphate site is built by S226, N228, and S271.

It belongs to the IspH family. [4Fe-4S] cluster is required as a cofactor.

It catalyses the reaction isopentenyl diphosphate + 2 oxidized [2Fe-2S]-[ferredoxin] + H2O = (2E)-4-hydroxy-3-methylbut-2-enyl diphosphate + 2 reduced [2Fe-2S]-[ferredoxin] + 2 H(+). It carries out the reaction dimethylallyl diphosphate + 2 oxidized [2Fe-2S]-[ferredoxin] + H2O = (2E)-4-hydroxy-3-methylbut-2-enyl diphosphate + 2 reduced [2Fe-2S]-[ferredoxin] + 2 H(+). Its pathway is isoprenoid biosynthesis; dimethylallyl diphosphate biosynthesis; dimethylallyl diphosphate from (2E)-4-hydroxy-3-methylbutenyl diphosphate: step 1/1. The protein operates within isoprenoid biosynthesis; isopentenyl diphosphate biosynthesis via DXP pathway; isopentenyl diphosphate from 1-deoxy-D-xylulose 5-phosphate: step 6/6. Catalyzes the conversion of 1-hydroxy-2-methyl-2-(E)-butenyl 4-diphosphate (HMBPP) into a mixture of isopentenyl diphosphate (IPP) and dimethylallyl diphosphate (DMAPP). Acts in the terminal step of the DOXP/MEP pathway for isoprenoid precursor biosynthesis. The sequence is that of 4-hydroxy-3-methylbut-2-enyl diphosphate reductase from Shouchella clausii (strain KSM-K16) (Alkalihalobacillus clausii).